Consider the following 1018-residue polypeptide: Importin-9 (1018 aa).

An Importin N-terminal domain is found at 35–114 (TEKRIKQLEY…RNILPNGLYD (80 aa)). Positions 921-950 (GKSDEPLTDSEEDGDDEDAPGNPDKPRYIS) are disordered. Over residues 926–939 (PLTDSEEDGDDEDA) the composition is skewed to acidic residues.

This sequence belongs to the importin beta family.

The protein localises to the cytoplasm. It localises to the nucleus. In terms of biological role, nuclear transport receptor that mediates nuclear import of proteins. Serves as receptor for nuclear localization signals (NLS) in cargo substrates. Is thought to mediate docking of the importin/substrate complex to the nuclear pore complex (NPC) through binding to nucleoporin and the complex is subsequently translocated through the pore by an energy requiring, Ran-dependent mechanism. Mediates the import of pre-assembled proteasomes into the nucleus during the late stages of sperm development. This chain is Importin-9, found in Drosophila melanogaster (Fruit fly).